Reading from the N-terminus, the 218-residue chain is Probable 2-aminoethanethiol dioxygenase (218 aa).

Requires Fe cation as cofactor.

The catalysed reaction is cysteamine + O2 = hypotaurine + H(+). In Dictyostelium discoideum (Social amoeba), this protein is Probable 2-aminoethanethiol dioxygenase (ado-1).